The chain runs to 307 residues: Coproporphyrin III ferrochelatase (307 aa).

Fe-coproporphyrin III-binding positions include Tyr-12, Arg-29, 45 to 46 (RY), Ser-53, and Tyr-124. Fe(2+) contacts are provided by His-181 and Glu-263.

The protein belongs to the ferrochelatase family.

The protein resides in the cytoplasm. It carries out the reaction Fe-coproporphyrin III + 2 H(+) = coproporphyrin III + Fe(2+). Its pathway is porphyrin-containing compound metabolism; protoheme biosynthesis. Its function is as follows. Involved in coproporphyrin-dependent heme b biosynthesis. Catalyzes the insertion of ferrous iron into coproporphyrin III to form Fe-coproporphyrin III. It can also insert iron into protoporphyrin IX, but it has a much stronger preference for coproprophyrin III as the substrate. The polypeptide is Coproporphyrin III ferrochelatase (Staphylococcus aureus (strain NCTC 8325 / PS 47)).